Consider the following 224-residue polypeptide: Large ribosomal subunit protein bL25 (224 aa).

The protein belongs to the bacterial ribosomal protein bL25 family. CTC subfamily. Part of the 50S ribosomal subunit; part of the 5S rRNA/L5/L18/L25 subcomplex. Contacts the 5S rRNA. Binds to the 5S rRNA independently of L5 and L18.

Its function is as follows. This is one of the proteins that binds to the 5S RNA in the ribosome where it forms part of the central protuberance. This chain is Large ribosomal subunit protein bL25, found in Psychrobacter arcticus (strain DSM 17307 / VKM B-2377 / 273-4).